The primary structure comprises 326 residues: Lipid droplet-associated hydrolase (326 aa).

Ser140 functions as the Nucleophile in the catalytic mechanism. Active-site charge relay system residues include Asp272 and His301.

This sequence belongs to the AB hydrolase superfamily. LDAH family. In terms of tissue distribution, expressed in liver, adrenal gland, prostate, spleen, kidney, brown and white adipose tissue, testis and to a lesser extent in brain (at protein level). Expressed in peritoneal macrophages and bone marrow-derived macrophages (at protein level). Highly expressed in macrophage and foam cell-rich areas in atherosclerotic lesions (at protein level). mRNA, but no protein, expressed in heart and muscle.

It localises to the lipid droplet. Its subcellular location is the endoplasmic reticulum. It carries out the reaction a cholesterol ester + H2O = cholesterol + a fatty acid + H(+). Its function is as follows. Probable serine lipid hydrolase associated with lipid droplets. Has low cholesterol esterase activity. Appears to lack triglyceride lipase activity. Involved in cholesterol and triglyceride homeostasis; stimulates cellular triglyceride accumulation and cellular cholesterol release. Acts antagonistically with PNPLA2/ATGL in regulation of cellular lipid stores. May regulate triglyceride accumulation indirectly through stimulation of PNPLA2/ATGL ubiquitination and proteasomal degradation. Promotes microtubule-dependent lipid droplet fusion. Highly expressed in macrophage-rich areas in atherosclerotic lesions, suggesting that it could promote cholesterol ester turnover in macrophages. Functionally, stimulates cellular triglyceride accumulation and lipid droplet fusion. In terms of biological role, associates with lipid droplets but does not stimulate cellular triglyceride accumulation, lipid droplet fusion or ATGL proteasomal degradation. This is Lipid droplet-associated hydrolase from Mus musculus (Mouse).